We begin with the raw amino-acid sequence, 341 residues long: Syntaxin-122 (341 aa).

At Met1 the chain carries N-acetylmethionine. Disordered stretches follow at residues Met1–Ser22 and Leu111–Val137. Topologically, residues Met1–Lys284 are cytoplasmic. 2 stretches are compositionally biased toward polar residues: residues Ser8 to His21 and Pro126 to Val137. Positions Cys64–Glu185 form a coiled coil. One can recognise a t-SNARE coiled-coil homology domain in the interval Ile213–Ala275. Residues Trp285–Val305 form a helical; Anchor for type IV membrane protein membrane-spanning segment. Residues Lys306–Arg341 lie on the Vesicular side of the membrane. The interval Gly312–Arg341 is disordered.

The protein belongs to the syntaxin family. In terms of assembly, part of the t-SNARE complex.

It localises to the membrane. Functionally, vesicle trafficking protein that functions in the secretory pathway. The polypeptide is Syntaxin-122 (SYP122) (Arabidopsis thaliana (Mouse-ear cress)).